The following is a 509-amino-acid chain: FAD-linked oxidoreductase dpmaF (509 aa).

Residues 1 to 21 (MTRLSLQLIAGLAGQAWLVNS) form the signal peptide. Residues 59 to 231 (LQYEPIAVAV…AEYGFETFPA (173 aa)) enclose the FAD-binding PCMH-type domain. Residues asparagine 125, asparagine 193, and asparagine 281 are each glycosylated (N-linked (GlcNAc...) asparagine).

It belongs to the oxygen-dependent FAD-linked oxidoreductase family. FAD is required as a cofactor.

Its pathway is secondary metabolite biosynthesis; terpenoid biosynthesis. Functionally, FAD-linked oxidoreductase; part of the gene cluster that mediates the biosynthesis of the diterpenoid pyrones subglutinols A and B. The first step of the pathway is the synthesis of the alpha-pyrone moiety by the polyketide synthase dpmaA via condensation of one acetyl-CoA starter unit with 3 malonyl-CoA units and 2 methylations. The alpha-pyrone is then combined with geranylgeranyl pyrophosphate (GGPP) formed by the GGPP synthase dpmaD through the action of the prenyltransferase dpmaC to yield a linear alpha-pyrone diterpenoid. Subsequent steps in the diterpenoid pyrone biosynthetic pathway involve the decalin core formation, which is initiated by the epoxidation of the C10-C11 olefin by the FAD-dependent oxidoreductase dpmaE, and is followed by a cyclization cascade catalyzed by the terpene cyclase dpmaB. The dehydrogenase dpmaF is then involved in tetrahydrofuran (THF) ring formation at the C5 unit to complete the formation of subglutinols A and B. The protein is FAD-linked oxidoreductase dpmaF of Metarhizium anisopliae (Entomophthora anisopliae).